Consider the following 353-residue polypeptide: UPF0283 membrane protein YcjF (353 aa).

The next 3 membrane-spanning stretches (helical) occupy residues 70–90, 100–120, and 213–233; these read MVMGGLALFGASVVGQGVQWT, VALGGCAAGALIVGAGVGSVV, and ESTLMIAVSPLALVDMAFIAW.

Belongs to the UPF0283 family.

It localises to the cell inner membrane. This Salmonella schwarzengrund (strain CVM19633) protein is UPF0283 membrane protein YcjF.